A 221-amino-acid chain; its full sequence is Oxaloacetate tautomerase oaa1, mitochondrial (221 aa).

Mg(2+)-binding residues include Glu-59, Glu-61, and Asp-93.

The protein belongs to the FAH family. Mg(2+) serves as cofactor. Requires Mn(2+) as cofactor.

Its subcellular location is the mitochondrion. It is found in the cytoplasm. The catalysed reaction is oxaloacetate = enol-oxaloacetate. In terms of biological role, tautomerase that converts enol-oxaloacetate, a strong inhibitor of succinate dehydrogenase, to the physiological keto form of oxaloacetate. This is Oxaloacetate tautomerase oaa1, mitochondrial from Schizosaccharomyces pombe (strain 972 / ATCC 24843) (Fission yeast).